The primary structure comprises 237 residues: Phosphoribosylaminoimidazole-succinocarboxamide synthase (237 aa).

It belongs to the SAICAR synthetase family.

It carries out the reaction 5-amino-1-(5-phospho-D-ribosyl)imidazole-4-carboxylate + L-aspartate + ATP = (2S)-2-[5-amino-1-(5-phospho-beta-D-ribosyl)imidazole-4-carboxamido]succinate + ADP + phosphate + 2 H(+). Its pathway is purine metabolism; IMP biosynthesis via de novo pathway; 5-amino-1-(5-phospho-D-ribosyl)imidazole-4-carboxamide from 5-amino-1-(5-phospho-D-ribosyl)imidazole-4-carboxylate: step 1/2. This chain is Phosphoribosylaminoimidazole-succinocarboxamide synthase, found in Pseudomonas fluorescens (strain ATCC BAA-477 / NRRL B-23932 / Pf-5).